The following is a 291-amino-acid chain: MSNKSNRRSLRDIGNTIGRNNIPSDKDNVFVRLSMSPLRTTSQKEFLKPPMRISPNKTDGMKHSIQVTPRRIMSPECLKGYVSKETQSLDRPQFKNSNKNVKIQNSDHITNIIFPTSPTKLTFSNENKIGGDGSLTRIRARFKNGLMSPERIQQQQQQHILPSDAKSNTDLCSNTELKDAPFENDLPRAKLKGKNLLVELKKEEEDVGNGIESLTKSNTKLNSMLANEGKIHKASFQKSVKFKLPDNIVTEETVELKEIKDLLLQMLRRQREIESRLSNIELQLTEIPKHK.

Residue Ser54 is modified to Phosphoserine. At Thr68 the chain carries Phosphothreonine. Phosphoserine is present on residues Ser74 and Ser88. Residues 254 to 284 are a coiled coil; that stretch reads VELKEIKDLLLQMLRRQREIESRLSNIELQL.

In terms of assembly, homooligomer; in vitro, FIN1 self-assembles into 10 nm diameter filaments. Interacts with the 14-3-3 proteins BMH1 and BMH2, and the protein phosphatase 1 complex catalytic subunit GLC7. Post-translationally, phosphorylated by CDC28. Phosphorylation is required for BMH1 and BMH2 interaction. Dephosphorylation by GLC7 depends on the presence of BMH1 and BMH2.

The protein localises to the nucleus. It is found in the cytoplasm. It localises to the cytoskeleton. Its subcellular location is the spindle pole. Forms cell-cycle specific filaments between the spindle pole bodies of dividing yeast cells. This is Filament protein FIN1 (FIN1) from Saccharomyces cerevisiae (strain ATCC 204508 / S288c) (Baker's yeast).